The chain runs to 287 residues: Xyloglucan endotransglucosylase protein 1 (287 aa).

The signal sequence occupies residues 1-28 (MAFMSFINGFSTLFLVALLASSMMAAKG). The GH16 domain occupies 29–219 (GNFYQDFDVT…WTKAPFTAYY (191 aa)). Glu105 acts as the Nucleophile in catalysis. The Proton donor role is filled by Glu109. A xyloglucan-binding site is contributed by Glu109. Asn113 carries an N-linked (GlcNAc...) asparagine glycan. Xyloglucan is bound by residues 122–124 (HTN), 132–134 (NRE), 198–199 (DW), and Gly203. Intrachain disulfides connect Cys227/Cys231 and Cys266/Cys280. Position 271 (Arg271) interacts with xyloglucan.

This sequence belongs to the glycosyl hydrolase 16 family. XTH group 2 subfamily. Contains at least one intrachain disulfide bond essential for its enzymatic activity. Expressed in fruit pulp. Expressed in leaves, flowers, calyces, stems and fruits. Highest expression in leaves and lowest in fruits.

The protein resides in the secreted. It is found in the cell wall. The protein localises to the extracellular space. It localises to the apoplast. The enzyme catalyses breaks a beta-(1-&gt;4) bond in the backbone of a xyloglucan and transfers the xyloglucanyl segment on to O-4 of the non-reducing terminal glucose residue of an acceptor, which can be a xyloglucan or an oligosaccharide of xyloglucan.. In terms of biological role, catalyzes xyloglucan endotransglycosylation (XET). Cleaves and religates xyloglucan polymers. Does not catalyze xyloglucan endohydrolysis (XEH). Overexpression in Arabidopsis transgenic plants results in elevated tolerance to abiotic stress, such as salt, ABA (abscisic acid) and drought stresses, and in the production of wider leaves. Overexpression in transgenic tomato plants slows down fruit ripening and softening, and the plants produce larger fruits. Both transgenic plants have larger and more irregular cells. Moreover, the fruits of the transgenic tomato have higher density of cell wall and intercellular spaces. May provide cells with more strength and thickness to maintain structural integrity. Probably involved in cell wall assembly and synthesis in fast growing tissues and in the maintenance of firmness in mature fruits. The polypeptide is Xyloglucan endotransglucosylase protein 1 (Diospyros kaki (Kaki persimmon)).